Here is a 196-residue protein sequence, read N- to C-terminus: Carnitine operon protein CaiE (196 aa).

Residues 173–196 (TQPLRQMEENRPRLQGTTDVTPKR) are disordered. Residues 187 to 196 (QGTTDVTPKR) show a composition bias toward polar residues.

It belongs to the transferase hexapeptide repeat family.

The protein operates within amine and polyamine metabolism; carnitine metabolism. In terms of biological role, overproduction of CaiE stimulates the activity of CaiB and CaiD. The chain is Carnitine operon protein CaiE from Escherichia coli O139:H28 (strain E24377A / ETEC).